The sequence spans 815 residues: Chromatin assembly factor 1 subunit FAS1 (815 aa).

Disordered regions lie at residues 1 to 39 (MDEVSTVNENENRKTMIEPKKLNKRKREPTAIENLTSEE), 292 to 330 (NNKEKEETESRKRIKKQQDESEKEQKRREKEQAELKKQL), 434 to 477 (KLST…KKSR), 502 to 577 (QVVK…EGVQ), and 791 to 815 (RCLPPSTKPQPAVEDAAERLENENA). 2 stretches are compositionally biased toward basic and acidic residues: residues 10–21 (NENRKTMIEPKK) and 292–328 (NNKEKEETESRKRIKKQQDESEKEQKRREKEQAELKK). Residues 244–336 (EEKLLLKQLE…KKQLQVQKQA (93 aa)) adopt a coiled-coil conformation. 2 stretches are compositionally biased toward acidic residues: residues 516 to 532 (LDYEVDSDEEWEEEEAG) and 554 to 576 (DDEDDSEDDFMVPDGYLSEDEGV). A compositionally biased stretch (basic and acidic residues) spans 806–815 (AAERLENENA).

It belongs to the CHAF1A family. In terms of assembly, component of the chromatin assembly factor 1 (CAF-1) complex, composed of FAS1, FAS2 and MSI1. Interacts with CYP71. Expressed in the shoot apical meristem, young leaf primordia, root tip and first lateral root primordium at the hypocotyl/root junction.

The protein localises to the nucleus. Component of the chromatin assembly factor complex (CAF-1) involved in chromatin assembly following DNA replication and DNA repair. Assembles histone octamers onto replicating DNA in vitro. Required for several aspects of development, including seedling growth and leaf hair differentiation. Plays a critical role in the organization of shoot apical meristem (SAM) and root apical meristem (RAM) during postembryonic development by facilitating stable maintenance of gene expression states. Seems not required to maintain transcriptional repression of heterochromatic genes. Involved in heterologous recombination. May repress endocycle. The sequence is that of Chromatin assembly factor 1 subunit FAS1 (FAS1) from Arabidopsis thaliana (Mouse-ear cress).